Reading from the N-terminus, the 653-residue chain is Endoglin (653 aa).

A signal peptide spans 1-24 (MDRGVLPQAIALLLAVCSFGPTAG). Residues 25–581 (LAEGVQCDLQ…IVSPGLPDKG (557 aa)) lie on the Extracellular side of the membrane. The interval 27–44 (EGVQCDLQPVDPKVTYTT) is OR1, N-terminal part. A required for interaction with GDF2 region spans residues 27–336 (EGVQCDLQPV…RSCGSGLQPS (310 aa)). 7 disulfides stabilise this stretch: Cys-31-Cys-206, Cys-51-Cys-181, Cys-241-Cys-329, Cys-349-Cys-381, Cys-362-Cys-442, Cys-393-Cys-411, and Cys-493-Cys-549. The interval 45 to 198 (SQVSEGCVAH…MGHTLEWKSH (154 aa)) is OR2. N-linked (GlcNAc...) asparagine glycosylation is present at Asn-57. Residues 199 to 329 (TQASVLGCHL…SVISLQDRSC (131 aa)) are OR1, C-terminal part. An essential for interaction with GDF2 region spans residues 269–281 (KAWTTGEYSFKIF). A glycan (N-linked (GlcNAc...) asparagine) is linked at Asn-306. Positions 362–512 (CSDDVMTLVL…MVDLIQNQEA (151 aa)) constitute a ZP domain. The chain crosses the membrane as a helical span at residues 582–606 (LVLPAVLGITFGAFLIGALLTAALW). Over 607 to 653 (YIHSHTRHPGKREPVVAVAAPASSESSSTNHSIGSTQSTPCSTSSMA) the chain is Cytoplasmic. Residues 625–634 (AAPASSESSS) are compositionally biased toward low complexity. The disordered stretch occupies residues 625–653 (AAPASSESSSTNHSIGSTQSTPCSTSSMA). A compositionally biased stretch (polar residues) spans 635–653 (TNHSIGSTQSTPCSTSSMA). 2 positions are modified to phosphoserine; by TGFBR1: Ser-641 and Ser-644.

As to quaternary structure, homodimer; disulfide-linked. Forms a heteromeric complex with the signaling receptors for transforming growth factor-beta: TGFBR1 and/or TGFBR2. It is able to bind TGFB1 and TGFB2 with high affinity, but not TGFB3. Interacts with GDF2, forming a heterotetramer with a 2:2 stoichiometry. Interacts with ACVRL1. Can form a heteromeric complex with GDF2 and ACVRL1. Interacts with BMP10. Interacts with DYNLT4. Interacts with ARRB2.

The protein localises to the cell membrane. Its function is as follows. Vascular endothelium glycoprotein that plays an important role in the regulation of angiogenesis. Required for normal structure and integrity of adult vasculature. Regulates the migration of vascular endothelial cells. Required for normal extraembryonic angiogenesis and for embryonic heart development. May regulate endothelial cell shape changes in response to blood flow, which drive vascular remodeling and establishment of normal vascular morphology during angiogenesis. May play a role in the binding of endothelial cells to integrins. Acts as a TGF-beta coreceptor and is involved in the TGF-beta/BMP signaling cascade that ultimately leads to the activation of SMAD transcription factors. Required for GDF2/BMP9 signaling through SMAD1 in endothelial cells and modulates TGFB1 signaling through SMAD3. The sequence is that of Endoglin (ENG) from Sus scrofa (Pig).